The sequence spans 126 residues: Probable V-type proton ATPase subunit G (126 aa).

The protein belongs to the V-ATPase G subunit family. As to quaternary structure, V-ATPase is a heteromultimeric enzyme made up of two complexes: the ATP-hydrolytic V1 complex and the proton translocation V0 complex. The V1 complex consists of three catalytic AB heterodimers that form a heterohexamer, three peripheral stalks each consisting of EG heterodimers, one central rotor including subunits D and F, and the regulatory subunits C and H. The proton translocation complex V0 consists of the proton transport subunit a, a ring of proteolipid subunits c9c'', rotary subunit d, subunits e and f, and the accessory subunits vah-19/Ac45 and vah-20/PRR. Interacts with ced-1.

Its function is as follows. Subunit of the V1 complex of vacuolar(H+)-ATPase (V-ATPase), a multisubunit enzyme composed of a peripheral complex (V1) that hydrolyzes ATP and a membrane integral complex (V0) that translocates protons. V-ATPase is responsible for acidifying and maintaining the pH of intracellular compartments and in some cell types, is targeted to the plasma membrane, where it is responsible for acidifying the extracellular environment. In neurons, required for necrotic cell death by promoting intracellular acidification. The polypeptide is Probable V-type proton ATPase subunit G (Caenorhabditis elegans).